The sequence spans 152 residues: Protein eva-1 homolog A (152 aa).

The interval 1-60 (MRLPLSHSPEHVEMALLSNILAAYSFVSENPERAALYFVSGVCIGLVLTLAALVIRISCH) is necessary for the localization and biological activity. A helical transmembrane segment spans residues 35 to 55 (ALYFVSGVCIGLVLTLAALVI). The disordered stretch occupies residues 70 to 97 (KFLQDRESSSDSSDSEDGSEDTVSDLSV). Residues 82-92 (SDSEDGSEDTV) are compositionally biased toward acidic residues. At threonine 106 the chain carries Phosphothreonine. Serine 114 carries the post-translational modification Phosphoserine; by FAM20C.

The protein belongs to the EVA1 family. As to expression, expressed in lung, kidney, liver, pancreas, placenta, but not in heart and skeletal muscle.

Its subcellular location is the endoplasmic reticulum membrane. The protein resides in the lysosome membrane. Acts as a regulator of programmed cell death, mediating both autophagy and apoptosis. The sequence is that of Protein eva-1 homolog A (EVA1A) from Homo sapiens (Human).